Here is a 194-residue protein sequence, read N- to C-terminus: Peroxynitrite isomerase 1 (194 aa).

The GXWXGXG signature appears at Gly-40–Gly-46. Positions 157 and 184 each coordinate heme b.

Belongs to the nitrobindin family. As to quaternary structure, homodimer. Heme b is required as a cofactor.

The catalysed reaction is peroxynitrite = nitrate. It participates in nitrogen metabolism. Heme-binding protein able to scavenge peroxynitrite and to protect free L-tyrosine against peroxynitrite-mediated nitration, by acting as a peroxynitrite isomerase that converts peroxynitrite to nitrate. Therefore, this protein likely plays a role in peroxynitrite sensing and in the detoxification of reactive nitrogen and oxygen species (RNS and ROS, respectively). Is able to bind nitric oxide (NO) in vitro, but may act as a sensor of peroxynitrite levels in vivo. The protein is Peroxynitrite isomerase 1 of Mycobacterium ulcerans (strain Agy99).